A 118-amino-acid polypeptide reads, in one-letter code: Large ribosomal subunit protein uL22 (118 aa).

The protein belongs to the universal ribosomal protein uL22 family. As to quaternary structure, part of the 50S ribosomal subunit.

In terms of biological role, this protein binds specifically to 23S rRNA; its binding is stimulated by other ribosomal proteins, e.g. L4, L17, and L20. It is important during the early stages of 50S assembly. It makes multiple contacts with different domains of the 23S rRNA in the assembled 50S subunit and ribosome. Functionally, the globular domain of the protein is located near the polypeptide exit tunnel on the outside of the subunit, while an extended beta-hairpin is found that lines the wall of the exit tunnel in the center of the 70S ribosome. The chain is Large ribosomal subunit protein uL22 from Nostoc punctiforme (strain ATCC 29133 / PCC 73102).